A 525-amino-acid polypeptide reads, in one-letter code: Glutamate--cysteine ligase (525 aa).

It belongs to the glutamate--cysteine ligase type 1 family. Type 1 subfamily.

The catalysed reaction is L-cysteine + L-glutamate + ATP = gamma-L-glutamyl-L-cysteine + ADP + phosphate + H(+). It participates in sulfur metabolism; glutathione biosynthesis; glutathione from L-cysteine and L-glutamate: step 1/2. The protein is Glutamate--cysteine ligase of Pseudoalteromonas translucida (strain TAC 125).